The sequence spans 277 residues: 3-methyl-2-oxobutanoate hydroxymethyltransferase (277 aa).

The Mg(2+) site is built by Asp43 and Asp82. Residues 43-44 (DS), Asp82, and Lys112 contribute to the 3-methyl-2-oxobutanoate site. Residue Glu114 participates in Mg(2+) binding. Catalysis depends on Glu181, which acts as the Proton acceptor.

This sequence belongs to the PanB family. In terms of assembly, homodecamer; pentamer of dimers. Mg(2+) serves as cofactor.

The protein resides in the cytoplasm. It carries out the reaction 3-methyl-2-oxobutanoate + (6R)-5,10-methylene-5,6,7,8-tetrahydrofolate + H2O = 2-dehydropantoate + (6S)-5,6,7,8-tetrahydrofolate. The protein operates within cofactor biosynthesis; (R)-pantothenate biosynthesis; (R)-pantoate from 3-methyl-2-oxobutanoate: step 1/2. Its function is as follows. Catalyzes the reversible reaction in which hydroxymethyl group from 5,10-methylenetetrahydrofolate is transferred onto alpha-ketoisovalerate to form ketopantoate. In Bacillus licheniformis (strain ATCC 14580 / DSM 13 / JCM 2505 / CCUG 7422 / NBRC 12200 / NCIMB 9375 / NCTC 10341 / NRRL NRS-1264 / Gibson 46), this protein is 3-methyl-2-oxobutanoate hydroxymethyltransferase.